We begin with the raw amino-acid sequence, 308 residues long: Testis-specific Y-encoded protein 8 (308 aa).

It belongs to the nucleosome assembly protein (NAP) family.

It is found in the cytoplasm. It localises to the nucleus. Its function is as follows. May be involved in sperm differentiation and proliferation. This is Testis-specific Y-encoded protein 8 (TSPY8) from Homo sapiens (Human).